Reading from the N-terminus, the 216-residue chain is MSSRKILPTKLNLINLRKQIRLTRTIKRLLENKREVLLIYLREYANEYEKLYSEVSQLLKEVYETYLMGVSAEGISTVESYANSVPPSLQVKSDLKVLFGVRIPIVKLDENSIQPQPFGDIEVSPYITKSRDAIAEAFKKILELVEMESAIRSLSTELRKTQRLINAIDSYILPYYTSSAKYIKGVLDDRTREEFVRLKMIRKVLQRRRGENVGNR.

This sequence belongs to the V-ATPase D subunit family. As to quaternary structure, has multiple subunits with at least A(3), B(3), C, D, E, F, H, I and proteolipid K(x). Post-translationally, the N-terminus is blocked.

The protein resides in the cell membrane. Component of the A-type ATP synthase that produces ATP from ADP in the presence of a proton gradient across the membrane. This chain is A-type ATP synthase subunit D, found in Sulfurisphaera tokodaii (strain DSM 16993 / JCM 10545 / NBRC 100140 / 7) (Sulfolobus tokodaii).